The sequence spans 196 residues: MPIVPKHFFERPTLELAEKLLGKIFVRRISDTIRLKGRIVETEAYCGEFDEASHAWRGKTTRNSMMFNSPGMLYVYLAYGSHYMLNIVSEPENIPGAVLIRAMEPIDGLMFMKEQRGTALATSLLSGPGKLTQAFAIRGDCNGKDLFNNEFFLENAQDIPQNAMGSGSRVGITKSRQLQWRKYILNNPHVSKARGS.

It belongs to the DNA glycosylase MPG family.

In Chlorobium phaeobacteroides (strain DSM 266 / SMG 266 / 2430), this protein is Putative 3-methyladenine DNA glycosylase.